Consider the following 364-residue polypeptide: Chorismate synthase (364 aa).

Residues 41 to 60 (MQHDLDRRRPGTSRYTTARR) form a disordered region. NADP(+) is bound by residues Arg-48 and Arg-54. Residues 125-127 (RSS), 238-239 (NA), Gly-278, 293-297 (KPTSS), and Arg-319 contribute to the FMN site.

It belongs to the chorismate synthase family. As to quaternary structure, homotetramer. It depends on FMNH2 as a cofactor.

It catalyses the reaction 5-O-(1-carboxyvinyl)-3-phosphoshikimate = chorismate + phosphate. Its pathway is metabolic intermediate biosynthesis; chorismate biosynthesis; chorismate from D-erythrose 4-phosphate and phosphoenolpyruvate: step 7/7. In terms of biological role, catalyzes the anti-1,4-elimination of the C-3 phosphate and the C-6 proR hydrogen from 5-enolpyruvylshikimate-3-phosphate (EPSP) to yield chorismate, which is the branch point compound that serves as the starting substrate for the three terminal pathways of aromatic amino acid biosynthesis. This reaction introduces a second double bond into the aromatic ring system. The protein is Chorismate synthase of Shewanella sp. (strain MR-4).